A 388-amino-acid chain; its full sequence is MSLDINWSLLSQPDESATDQLSESLIALLNAQLAEAHRPSFIGPITVTAFDFGNAGPDLEVKDIRDVWRVFDQGDDEGDFAEEEKQREKEREERDKLRNEALKSSLDGERYELVDRYSSTEGTSSFEYQPEYDIHEQHGDDYRIRGRRPLSYTFGYPHDRLAVHRSSSSRSFIPFPFDHPPPALHIPSTPGLNPSLVSHPISARFSRRPMSIAASAAPRPTPRRRPIEPSSTSPSPPAHPAGLPPKASSSSIPSLQLHLRLSHASDLHLTLLTSLQVNYPSALFMALPLKLSITGFQLNADIVMAYSGEKNRVHLTIVDDESNPAHKEDKQIPLGQRLLSNLQIESEIGHADAHVLRNVGKVERFIVDVVRKTLVDELVFPNFHTVAL.

An SMP-LTD domain is found at 1-388 (MSLDINWSLL…VFPNFHTVAL (388 aa)). 2 disordered regions span residues 75–101 (DDEGDFAEEEKQREKEREERDKLRNEA) and 209–251 (PMSI…SSSS). Basic and acidic residues predominate over residues 83–101 (EEKQREKEREERDKLRNEA). The segment covering 234 to 243 (PSPPAHPAGL) has biased composition (pro residues).

This sequence belongs to the MDM12 family. Component of the ER-mitochondria encounter structure (ERMES) or MDM complex, composed of MMM1, MDM10, MDM12 and MDM34. An MMM1 homodimer associates with one molecule of MDM12 on each side in a pairwise head-to-tail manner, and the SMP-LTD domains of MMM1 and MDM12 generate a continuous hydrophobic tunnel for phospholipid trafficking.

It localises to the mitochondrion outer membrane. The protein resides in the endoplasmic reticulum membrane. In terms of biological role, component of the ERMES/MDM complex, which serves as a molecular tether to connect the endoplasmic reticulum (ER) and mitochondria. Components of this complex are involved in the control of mitochondrial shape and protein biogenesis, and function in nonvesicular lipid trafficking between the ER and mitochondria. MDM12 is required for the interaction of the ER-resident membrane protein MMM1 and the outer mitochondrial membrane-resident beta-barrel protein MDM10. The MDM12-MMM1 subcomplex functions in the major beta-barrel assembly pathway that is responsible for biogenesis of all mitochondrial outer membrane beta-barrel proteins, and acts in a late step after the SAM complex. The MDM10-MDM12-MMM1 subcomplex further acts in the TOM40-specific pathway after the action of the MDM12-MMM1 complex. Essential for establishing and maintaining the structure of mitochondria and maintenance of mtDNA nucleoids. This Cryptococcus neoformans var. neoformans serotype D (strain B-3501A) (Filobasidiella neoformans) protein is Mitochondrial distribution and morphology protein 12.